Consider the following 316-residue polypeptide: Glutathione synthetase (316 aa).

One can recognise an ATP-grasp domain in the interval 124–310; that stretch reads EKLFTAWFPE…ITGKLMDAIE (187 aa). ATP is bound at residue 150–207; it reads FREEHGDVILKPLDGMGGASIFRVKENDPNVSVIIETLTNHGQNYAMAQTFVPDISNG. Residues glutamate 281 and asparagine 283 each contribute to the Mg(2+) site.

Belongs to the prokaryotic GSH synthase family. Mg(2+) is required as a cofactor. The cofactor is Mn(2+).

The catalysed reaction is gamma-L-glutamyl-L-cysteine + glycine + ATP = glutathione + ADP + phosphate + H(+). It participates in sulfur metabolism; glutathione biosynthesis; glutathione from L-cysteine and L-glutamate: step 2/2. The polypeptide is Glutathione synthetase (Vibrio parahaemolyticus serotype O3:K6 (strain RIMD 2210633)).